The following is a 475-amino-acid chain: MSPQTETKAGAGFKAGVKDYRLTYYTPEYETKETDILAAFRMTPQPGVPPEEAGAAVAAESSTGTWTTVWTDGLTSLDRYKGRCYDIEPVAGEENQYIAYVAYPLDLFEEGSVTNLFTSIVGNVFGFKALRALRLEDLRIPPAYSKTFQGPPHGYQVERDKINKYGRPLLGCTIKPKLGLSAKNYGRAVYECLRGGLDFTKDDENVNSQPFMRWRDRFLFVAEAIYKAQAETGEIKGHYLNATAGTCEEMMKRAEYAKELGVPIIMHDYLTGGFTANTSLAHYCRDNGLLLHIHRAMQAVIDRQKNHGIHFRVLAKALRMSGGDHIHSGTVVGKLEGERQVTLGFVDLLRDDYIEKDRSRGIYFTQDWVSMPGVLPVASGGIHVWHMPALTEIFGDDSVLQFGGGTLGHPWGNAPGRVANRVALEACVQARNEGRDLAREGNEVIREACKWSPELAAACEVWKEIKFEFDTIDTL.

Positions 1 to 2 (MS) are excised as a propeptide. N-acetylproline is present on P3. K14 is subject to N6,N6,N6-trimethyllysine. N123 and T173 together coordinate substrate. The active-site Proton acceptor is the K175. K177 is a substrate binding site. Positions 201, 203, and 204 each coordinate Mg(2+). K201 bears the N6-carboxylysine mark. Residue H294 is the Proton acceptor of the active site. Residues R295, H327, and S379 each contribute to the substrate site.

It belongs to the RuBisCO large chain family. Type I subfamily. As to quaternary structure, heterohexadecamer of 8 large chains and 8 small chains; disulfide-linked. The disulfide link is formed within the large subunit homodimers. The cofactor is Mg(2+). Post-translationally, the disulfide bond which can form in the large chain dimeric partners within the hexadecamer appears to be associated with oxidative stress and protein turnover.

It is found in the plastid. The protein resides in the chloroplast. The enzyme catalyses 2 (2R)-3-phosphoglycerate + 2 H(+) = D-ribulose 1,5-bisphosphate + CO2 + H2O. It catalyses the reaction D-ribulose 1,5-bisphosphate + O2 = 2-phosphoglycolate + (2R)-3-phosphoglycerate + 2 H(+). Functionally, ruBisCO catalyzes two reactions: the carboxylation of D-ribulose 1,5-bisphosphate, the primary event in carbon dioxide fixation, as well as the oxidative fragmentation of the pentose substrate in the photorespiration process. Both reactions occur simultaneously and in competition at the same active site. The polypeptide is Ribulose bisphosphate carboxylase large chain (Spirogyra maxima (Green alga)).